Here is a 283-residue protein sequence, read N- to C-terminus: Nickel/cobalt efflux system RcnA (283 aa).

The Periplasmic portion of the chain corresponds to 1–5 (MGEFS). Residues 6 to 26 (ILLQQGNGWFFIPSAILLGIL) traverse the membrane as a helical segment. The Cytoplasmic segment spans residues 27 to 51 (HGLEPGHSKTMMAAFIIAIKGTIKQ). The helical transmembrane segment at 52–72 (AFMLGLAATLSHTAVVWLIAL) threads the bilayer. Over 73-85 (GGMYLSRAYAAES) the chain is Periplasmic. The chain crosses the membrane as a helical span at residues 86-106 (VEPWLQLISAIIILGTACWMF). Over 107–183 (WRTWRGEQQW…FHGQKVTNEQ (77 aa)) the chain is Cytoplasmic. Residues 120 to 148 (SHHDHDHDHDHDHDHDHDHDHDHDHHGHT) are compositionally biased toward basic and acidic residues. The segment at 120–149 (SHHDHDHDHDHDHDHDHDHDHDHDHHGHTY) is disordered. Residues 184–204 (ILLFGLTGGLIPCPAAITLLL) traverse the membrane as a helical segment. Residues 205-218 (ICIQLQALTLGATM) are Periplasmic-facing. A helical membrane pass occupies residues 219-239 (VLCFSLGLALTLVAVGVGAAI). Residues 240-260 (SVQQAVKRWNGFTTLARRAPY) lie on the Cytoplasmic side of the membrane. Residues 261–281 (FSSILIGLVGLYMGIHGYTGI) form a helical membrane-spanning segment. The Periplasmic segment spans residues 282–283 (MQ).

Belongs to the NiCoT transporter (TC 2.A.52) family. RcnA subfamily.

The protein resides in the cell inner membrane. Its function is as follows. Efflux system for nickel and cobalt. The protein is Nickel/cobalt efflux system RcnA (rcnA) of Salmonella arizonae (strain ATCC BAA-731 / CDC346-86 / RSK2980).